The primary structure comprises 274 residues: Large ribosomal subunit protein uL2cz/uL2cy (274 aa).

Residues 225-274 form a disordered region; the sequence is PVDHPHGGGEGRAPIGRKKPVTPWGYPALGRRTRKRKKYSETLILRRRSK.

The protein belongs to the universal ribosomal protein uL2 family. Part of the 50S ribosomal subunit.

The protein resides in the plastid. It is found in the chloroplast. This chain is Large ribosomal subunit protein uL2cz/uL2cy (rpl2-A), found in Crucihimalaya wallichii (Rock-cress).